The following is a 302-amino-acid chain: Acetaldehyde dehydrogenase 2 (302 aa).

The active-site Acyl-thioester intermediate is the Cys130. NAD(+)-binding positions include 161–169 and Asn272; that span reads SVGPGTRRN.

The protein belongs to the acetaldehyde dehydrogenase family.

It catalyses the reaction acetaldehyde + NAD(+) + CoA = acetyl-CoA + NADH + H(+). The polypeptide is Acetaldehyde dehydrogenase 2 (Cupriavidus necator (strain ATCC 17699 / DSM 428 / KCTC 22496 / NCIMB 10442 / H16 / Stanier 337) (Ralstonia eutropha)).